A 487-amino-acid polypeptide reads, in one-letter code: Glutamyl-tRNA(Gln) amidotransferase subunit A (487 aa).

Catalysis depends on charge relay system residues K80 and S155. S179 (acyl-ester intermediate) is an active-site residue.

This sequence belongs to the amidase family. GatA subfamily. Heterotrimer of A, B and C subunits.

The enzyme catalyses L-glutamyl-tRNA(Gln) + L-glutamine + ATP + H2O = L-glutaminyl-tRNA(Gln) + L-glutamate + ADP + phosphate + H(+). Allows the formation of correctly charged Gln-tRNA(Gln) through the transamidation of misacylated Glu-tRNA(Gln) in organisms which lack glutaminyl-tRNA synthetase. The reaction takes place in the presence of glutamine and ATP through an activated gamma-phospho-Glu-tRNA(Gln). This Leptospira interrogans serogroup Icterohaemorrhagiae serovar copenhageni (strain Fiocruz L1-130) protein is Glutamyl-tRNA(Gln) amidotransferase subunit A.